The chain runs to 698 residues: Elongation factor G (698 aa).

The region spanning 10 to 285 (DKTRNIGIMA…GVVDYLPSPL (276 aa)) is the tr-type G domain. GTP-binding positions include 19–26 (AHIDAGKT), 83–87 (DTPGH), and 137–140 (NKMD).

This sequence belongs to the TRAFAC class translation factor GTPase superfamily. Classic translation factor GTPase family. EF-G/EF-2 subfamily.

It localises to the cytoplasm. Functionally, catalyzes the GTP-dependent ribosomal translocation step during translation elongation. During this step, the ribosome changes from the pre-translocational (PRE) to the post-translocational (POST) state as the newly formed A-site-bound peptidyl-tRNA and P-site-bound deacylated tRNA move to the P and E sites, respectively. Catalyzes the coordinated movement of the two tRNA molecules, the mRNA and conformational changes in the ribosome. This is Elongation factor G from Lactobacillus johnsonii (strain CNCM I-12250 / La1 / NCC 533).